The primary structure comprises 304 residues: Undecaprenyl-diphosphatase (304 aa).

The next 8 helical transmembrane spans lie at 5-25 (FLFILKALIIAIVEGLTEFVP), 47-67 (GFPEMYEVVIQLGAILAVVVL), 72-92 (ISSSVVEFLSYIFSFIGLKTS), 111-131 (FGINVIIGTIPAAILGLLFHD), 137-157 (LFSTKTVAIGFIVGGILLIVI), 209-231 (ISGLSTTVATEFTFFLAIPAMVG), 248-268 (TNWISLILGFIVAFIVSLVVI), and 283-303 (FAIYRVFAGIVLAILIFTKVI).

The protein belongs to the UppP family.

Its subcellular location is the cell membrane. It carries out the reaction di-trans,octa-cis-undecaprenyl diphosphate + H2O = di-trans,octa-cis-undecaprenyl phosphate + phosphate + H(+). Its function is as follows. Catalyzes the dephosphorylation of undecaprenyl diphosphate (UPP). Confers resistance to bacitracin. In Clostridium perfringens (strain 13 / Type A), this protein is Undecaprenyl-diphosphatase.